The sequence spans 1365 residues: TMEHYLKTYLSWLTEEQKEKLKEMKEAGKTKAEIQHEVMHYYDQLHGEEKQQATEKLKVGCKMLLKGIIGEEKVVELRNMKEAGADIQELQQKVEKMLSEVTDEKQKEKVHEYGPACKKIFGATTLQHHRRRRHHFTLESSLDTHLKWLSQEQKDELLKMKKDGKTKKELEAKILHYYDELEGDAKKEATEHLKGGCGEILKHVVGEEKAAELKNLKDSGASKEELKAKVEEALHAVTDEEKKQYIADFGPACKKIYGVHTSRRRRHHFTLESSLDTHLKWLSQEQKDELLKMKKDGKAKKELEAKILHYYDELEGDAKKEATEHLKGGCAEILKHVVGEEKAAELKNLKDSGASKEELKAKVEEALHAVTDEEKKQYIADFGPACKKIYGVHTSRRRRHHFTLESSLDTHLKWLSQEQKDELLKMKKDGKTKKDLQAKILHYYDELEGDAKKEATEHLKDGCREILKHVVGEEKEAELKKLKDSGASKEEVKAKVEEALHAVTDEEKKQYIADFGPACKKIFGAAHTSRRRRHHFTLESSLDTHLKWLSQEQKDELLKMKKDGKAKKELEAKILHYYDELEGDAKKEATEHLKGGCREILKHVVGEEKAAELKNLKDSGASKEELKAKVEEALHAVTDEEKKQYIADFGPACKKIYGVHTSRRRRHHFTLESSLDTHLKWLSQEQKDELLKMKKDGKAKKELEAKILHYYDELEGDAKKEATEHLKGGCREILKHVVGEEKAAELKNLKDSGASKEELKAKVEEALHAVTDEEKKQYIADFGPACKKIYGVHTSRRRRHHFTLESSLDTHLKWLSQEQKDELLKMKKDGKAKKELEAKILHYYDELEGDAKKEATEHLKGGCREILKHVVGEEKAAELKNLKDSGASKEELKAKVEEALHAVTDEEKKQYIADFGPACKKIYGVHTSRRRRHHFTLESSLDTHLKWLSQEQKDELLKMKKDGKAKKELEAKILHYYDELEGDAKKEATEHLKGGCREILKHVVGEEKAAELKNLKDSGASKEELKAKVEEALHAVTDEEKKQYIADFGPACKKIYGVHTSRRRRHHFTLESSLDTHLKWLSQEQKDELLKMKKDGKAKKELEAKILHYYDELEGDAKKEATEHLKGGCREILKHVVGEEKAAELKNLKDSGASKEELKAKVEEALHAVTDEEKKQYIADFGPACKKIYGVHTSRRRRHHFTLESSLDTHLKWLSQEQKDELLKMKKDGKAKKELEAKILHYYDELEGDAKKEATEHLKGGCREILKHVVGEEKAAELKNLKDSGASKEELKAKVEEALHAVTDEEKKQYIADFGPACKKIYGVHTSRRRRYHAEDGTDDIDGLAQSRQRRSGFFEKLIDVFAFF.

The protein belongs to the NPA family. In terms of processing, nematode polyprotein allergens (NPAs) are synthesized as large polypeptides that are subsequently proteolytically cleaved to active polypeptide units. Pseudocoelomic fluid.

Has high binding affinity for fatty acids and retinoids. The polypeptide is Polyprotein ABA-1 (ABA-1) (Ascaris suum (Pig roundworm)).